Consider the following 158-residue polypeptide: Tryptophan-rich protein TspO (158 aa).

The next 5 helical transmembrane spans lie at 5-25 (ILTLALCIGLCLAVGFAGSTF), 48-68 (LFPPVWTILFIMMGTALAKVL), 79-99 (VGVVLFAIQLMLNLGWSASFF), 105-125 (LAGLVDIVLLWIFIVLTMLAF), and 134-154 (LLLVPYLCWVSFASYLNFTIL).

It belongs to the TspO/BZRP family.

The protein localises to the membrane. It is found in the cell membrane. Binds tetrapyrroles and promotes the photooxidative degradation of protoporphyrin IX. Can bind the benzodiazepine receptor agonist PK-11195 (in vitro); this interferes with photooxidative tetrapyrrole degradation. May play a role in the transmembrane transport of tetrapyrroles and similar compounds. The sequence is that of Tryptophan-rich protein TspO from Chlorobaculum tepidum (strain ATCC 49652 / DSM 12025 / NBRC 103806 / TLS) (Chlorobium tepidum).